The chain runs to 297 residues: UTP--glucose-1-phosphate uridylyltransferase (297 aa).

It belongs to the UDPGP type 2 family.

It catalyses the reaction alpha-D-glucose 1-phosphate + UTP + H(+) = UDP-alpha-D-glucose + diphosphate. It participates in carbohydrate metabolism; nucleotide-sugar metabolism. Its pathway is bacterial outer membrane biogenesis; lipopolysaccharide biosynthesis. The chain is UTP--glucose-1-phosphate uridylyltransferase (galF) from Escherichia coli O157:H7.